We begin with the raw amino-acid sequence, 46 residues long: Diuretic hormone class 1 (46 aa).

Position 46 is an isoleucine amide (isoleucine 46).

The protein resides in the secreted. Its function is as follows. Regulation of fluid secretion. Stimulates primary urine secretion by Malpighian tubules and causes a dose-dependent stimulation of cAMP levels in the tubules. Has a greater effect on the transport of Na(+) then K(+) ions. In vitro, has synergistic effects with the smaller diuretic hormone DH(31) which co-occurs with it. The sequence is that of Diuretic hormone class 1 from Diploptera punctata (Pacific beetle cockroach).